Reading from the N-terminus, the 153-residue chain is Ribosomal RNA large subunit methyltransferase H (153 aa).

S-adenosyl-L-methionine is bound by residues Leu-70, Gly-102, and 121-126 (FSKMTF).

The protein belongs to the RNA methyltransferase RlmH family. In terms of assembly, homodimer.

The protein resides in the cytoplasm. The enzyme catalyses pseudouridine(1915) in 23S rRNA + S-adenosyl-L-methionine = N(3)-methylpseudouridine(1915) in 23S rRNA + S-adenosyl-L-homocysteine + H(+). Specifically methylates the pseudouridine at position 1915 (m3Psi1915) in 23S rRNA. The sequence is that of Ribosomal RNA large subunit methyltransferase H from Desulfotalea psychrophila (strain LSv54 / DSM 12343).